The following is a 156-amino-acid chain: Small ribosomal subunit protein uS7 (156 aa).

Belongs to the universal ribosomal protein uS7 family. In terms of assembly, part of the 30S ribosomal subunit. Contacts proteins S9 and S11.

One of the primary rRNA binding proteins, it binds directly to 16S rRNA where it nucleates assembly of the head domain of the 30S subunit. Is located at the subunit interface close to the decoding center, probably blocks exit of the E-site tRNA. The chain is Small ribosomal subunit protein uS7 from Leifsonia xyli subsp. xyli (strain CTCB07).